Reading from the N-terminus, the 914-residue chain is Solute carrier family 12 member 9 (914 aa).

Residues 1–36 are Cytoplasmic-facing; the sequence is MASESSPLLAYRLLGEEGAAFPPNGAGVSGVPSSRK. Ser-6 is modified (phosphoserine). A helical transmembrane segment spans residues 37–57; that stretch reads LSTFLGVVVPTVLSMFSIVVF. Topologically, residues 58–72 are extracellular; the sequence is LRIGFVVGHAGLLQA. The helical transmembrane segment at 73-93 threads the bilayer; that stretch reads LAMLLVAYIILALTVLSVCAI. Residues 94–119 lie on the Cytoplasmic side of the membrane; the sequence is ATNGAVRGGGAYFMISRTLGPEVGGS. The chain crosses the membrane as a helical span at residues 120–140; that stretch reads IGLMFYLANVCGCAVSLLGLV. Topologically, residues 141 to 167 are extracellular; the sequence is ESILDVFGADATGSSGIQVLPQGYGWN. Residues 168 to 188 traverse the membrane as a helical segment; sequence LLYGSLLLGLVGGVCTLGAGL. The Cytoplasmic segment spans residues 189 to 193; that stretch reads YARAS. The helical transmembrane segment at 194–214 threads the bilayer; it reads FLTFLLVSGSLASVLVSFVAV. Residues 215–262 lie on the Extracellular side of the membrane; the sequence is GPRNIPLAPRPGTNASSVPHRHGHFTGFNGSTLRDNLGAGYAEDYTTG. 2 N-linked (GlcNAc...) asparagine glycosylation sites follow: Asn-228 and Asn-243. A helical membrane pass occupies residues 263–283; sequence AMMTFASVFAVLFNGCTGIMA. The Cytoplasmic portion of the chain corresponds to 284–297; it reads GANMSGELKDPSRA. The helical transmembrane segment at 298 to 318 threads the bilayer; the sequence is IPLGTIIAVAYTFFIYILLFF. Topologically, residues 319–338 are extracellular; sequence LSSFTCDRALLQEDYGFFRD. A helical transmembrane segment spans residues 339–359; the sequence is ISLWPPLVLIGIYATALSASM. Residues 360 to 376 are Cytoplasmic-facing; it reads SSLIGASRILHALAQDD. Residues 377 to 399 traverse the membrane as a helical segment; sequence LFGVILAPAKVVSGGGNPWGAVL. Residues 400-416 are Extracellular-facing; the sequence is YSWGLVQLVLLAGKLNT. Residues 417–437 traverse the membrane as a helical segment; the sequence is LAAVVTVFYLVAYAAVDLSCL. Topologically, residues 438-466 are cytoplasmic; that stretch reads SLEWASAPNFRPTFSLFSWHTCLLGVASC. The chain crosses the membrane as a helical span at residues 467 to 487; it reads LLMMFLISPGAAGGSLLLMGL. The Extracellular segment spans residues 488–740; the sequence is LSALLTARGG…LLRPRGGPGY (253 aa). A disordered region spans residues 645–678; sequence PAFSEPAEGTREGGSPALSTLFPPPRAPGSPRAL. The helical transmembrane segment at 741–761 threads the bilayer; it reads VDVCGLFLLQMATILSMVPAW. Residues 762–914 lie on the Cytoplasmic side of the membrane; that stretch reads HSARLRIFLC…GVTPVTCTDL (153 aa). Residues 844–864 are disordered; it reads QGRGTVGGPGGPEGRDGEEGP.

This sequence belongs to the SLC12A transporter family. As to quaternary structure, interacts with SLC12A1.

The protein localises to the cell membrane. The protein resides in the lysosome membrane. Functionally, may be an inhibitor of SLC12A1. Seems to correspond to a subunit of a multimeric transport system and thus, additional subunits may be required for its function. May play a role in lysosomal ion flux and osmoregulation. The sequence is that of Solute carrier family 12 member 9 (Slc12a9) from Mus musculus (Mouse).